Here is a 204-residue protein sequence, read N- to C-terminus: Small ribosomal subunit protein uS4 (204 aa).

The 65-residue stretch at 92-156 (RRLDALVLRS…SKVPFQVARE (65 aa)) folds into the S4 RNA-binding domain.

It belongs to the universal ribosomal protein uS4 family. In terms of assembly, part of the 30S ribosomal subunit. Contacts protein S5. The interaction surface between S4 and S5 is involved in control of translational fidelity.

One of the primary rRNA binding proteins, it binds directly to 16S rRNA where it nucleates assembly of the body of the 30S subunit. In terms of biological role, with S5 and S12 plays an important role in translational accuracy. The polypeptide is Small ribosomal subunit protein uS4 (Streptomyces griseus subsp. griseus (strain JCM 4626 / CBS 651.72 / NBRC 13350 / KCC S-0626 / ISP 5235)).